A 469-amino-acid polypeptide reads, in one-letter code: Protein translocase subunit SecY (469 aa).

At M1–P20 the chain is on the cytoplasmic side. A helical transmembrane segment spans residues K21 to P47. At L48–N59 the chain is on the extracellular side. Residues L60 to F67 constitute an intramembrane region (helical). Residues L60–I88 form a discontinuously helical membrane-spanning segment. An intramembrane segment occupies A68–I79. Residues G80–I88 constitute an intramembrane region (helical). Residues M89–V109 are Cytoplasmic-facing. The helical transmembrane segment at K110–G131 threads the bilayer. Residues Y132–L146 are Extracellular-facing. The helical transmembrane segment at F147–Q171 threads the bilayer. The Cytoplasmic segment spans residues K172–S178. A helical membrane pass occupies residues G179–F197. Topologically, residues G198–P240 are extracellular. Residues D241–T262 form a helical membrane-spanning segment. Topologically, residues I263 to S287 are cytoplasmic. Residues S288–S309 form a helical membrane-spanning segment. The Extracellular portion of the chain corresponds to Y310–L347. The chain crosses the membrane as a helical span at residues G348–W367. The Cytoplasmic segment spans residues V368–L410. Residues A411–G429 form a helical membrane-spanning segment. The Extracellular portion of the chain corresponds to A430 to G432. The helical transmembrane segment at T433–Y447 threads the bilayer. At Y448 to E469 the chain is on the cytoplasmic side.

This sequence belongs to the SecY/SEC61-alpha family. As to quaternary structure, component of the Sec protein translocase complex. Heterotrimer consisting of alpha (SecY), beta (SecG) and gamma (SecE) subunits. The heterotrimers can form oligomers, although 1 heterotrimer is thought to be able to translocate proteins. Interacts with the ribosome. May interact with SecDF, and other proteins may be involved.

The protein resides in the cell membrane. The central subunit of the protein translocation channel SecYEG. Consists of two halves formed by TMs 1-5 and 6-10. These two domains form a lateral gate at the front which open onto the bilayer between TMs 2 and 7, and are clamped together by SecE at the back. The channel is closed by both a pore ring composed of hydrophobic SecY resides and a short helix (helix 2A) on the extracellular side of the membrane which forms a plug. The plug probably moves laterally to allow the channel to open. The ring and the pore may move independently. This Saccharolobus solfataricus (strain ATCC 35092 / DSM 1617 / JCM 11322 / P2) (Sulfolobus solfataricus) protein is Protein translocase subunit SecY.